Reading from the N-terminus, the 604-residue chain is Prostaglandin G/H synthase 2 (604 aa).

The first 17 residues, 1–17 (MLARALLLCAALALGQA), serve as a signal peptide directing secretion. The EGF-like domain maps to 18–55 (ANPCCSNPCQNRGECLSVGFDRYKCDCTRTGYYGENCT). Disulfide bonds link Cys21–Cys32, Cys22–Cys145, Cys26–Cys42, and Cys44–Cys54. A glycan (N-linked (GlcNAc...) asparagine) is linked at Asn53. Substrate is bound at residue Arg106. An N-linked (GlcNAc...) asparagine glycan is attached at Asn130. The active-site Proton acceptor is His193. Tyr341 is a binding site for substrate. Tyr371 (for cyclooxygenase activity) is an active-site residue. Residue His374 coordinates heme b. N-linked (GlcNAc...) asparagine glycosylation occurs at Asn396. Cys526 is subject to S-nitrosocysteine. Cysteines 555 and 561 form a disulfide. Residue Asn580 is glycosylated (N-linked (GlcNAc...) asparagine).

The protein belongs to the prostaglandin G/H synthase family. As to quaternary structure, homodimer. Heme b serves as cofactor. S-nitrosylation by NOS2 (iNOS) activates enzyme activity. S-nitrosylation may take place on different Cys residues in addition to Cys-526.

Its subcellular location is the microsome membrane. It is found in the endoplasmic reticulum membrane. It localises to the nucleus inner membrane. The protein localises to the nucleus outer membrane. The catalysed reaction is (5Z,8Z,11Z,14Z)-eicosatetraenoate + AH2 + 2 O2 = prostaglandin H2 + A + H2O. It catalyses the reaction (5Z,8Z,11Z,14Z)-eicosatetraenoate + 2 O2 = prostaglandin G2. The enzyme catalyses prostaglandin G2 + AH2 = prostaglandin H2 + A + H2O. It carries out the reaction (5Z,8Z,11Z,14Z,17Z)-eicosapentaenoate + 2 O2 = prostaglandin G3. The catalysed reaction is prostaglandin G3 + AH2 = prostaglandin H3 + A + H2O. It catalyses the reaction (8Z,11Z,14Z)-eicosatrienoate + 2 O2 = prostaglandin G1. The enzyme catalyses prostaglandin G1 + AH2 = prostaglandin H1 + A + H2O. It carries out the reaction 2-(5Z,8Z,11Z,14Z)-eicosatetraenoyl-sn-glycero-3-phosphoethanolamine + 2 O2 = 2-(prostaglandin G2)-sn-glycero-3-phosphoethanolamine. The catalysed reaction is 2-(prostaglandin G2)-sn-glycero-3-phosphoethanolamine + AH2 = 2-(prostaglandin H2)-sn-glycero-3-phosphoethanolamine + A + H2O. It catalyses the reaction 2-(5Z,8Z,11Z,14Z)-eicosatetraenoyl-sn-glycero-3-phosphocholine + 2 O2 = 2-(prostaglandin G2)-sn-glycero-3-phosphocholine. The enzyme catalyses 2-(prostaglandin G2)-sn-glycero-3-phosphocholine + AH2 = 2-(prostaglandin H2)-sn-glycero-3-phosphocholine + A + H2O. It carries out the reaction (15S)-hydroperoxy-(5Z,8Z,11Z,13E)-eicosatetraenoate + AH2 = (15S)-hydroxy-(5Z,8Z,11Z,13E)-eicosatetraenoate + A + H2O. The catalysed reaction is 2-(5Z,8Z,11Z,14Z)-eicosatetraenoyl-sn-glycero-3-phosphocholine + AH2 + O2 = 2-[(15S)-hydroxy-(5Z,8Z,11Z,13E)-eicosatetraenoyl]-sn-glycero-3-phosphocholine + A + H2O. It catalyses the reaction 2-(5Z,8Z,11Z,14Z)-eicosatetraenoyl-sn-glycero-3-phosphocholine + AH2 + O2 = 2-[(15R)-hydroxy-(5Z,8Z,11Z,13E)-eicosatetraenoyl]-sn-glycero-3-phosphocholine + A + H2O. The enzyme catalyses 2-(5Z,8Z,11Z,14Z)-eicosatetraenoyl-sn-glycero-3-phosphocholine + AH2 + O2 = 2-[(11R)-hydroxy-(5Z,8Z,12E,14Z)-eicosatetraenoyl]-sn-glycero-3-phosphocholine + A + H2O. It carries out the reaction (9Z,12Z)-octadecadienoate + AH2 + O2 = 9-hydroxy-(10E,12Z)-octadecadienoate + A + H2O. The catalysed reaction is (9Z,12Z)-octadecadienoate + AH2 + O2 = 13-hydroxy-(9Z,11E)-octadecadienoate + A + H2O. It catalyses the reaction (5Z,8Z,11Z,14Z)-eicosatetraenoate + AH2 + O2 = (15R)-hydroxy-(5Z,8Z,11Z,13E)-eicosatetraenoate + A + H2O. The enzyme catalyses (5Z,8Z,11Z,14Z)-eicosatetraenoate + AH2 + O2 = (11R)-hydroxy-(5Z,8Z,12E,14Z)-eicosatetraenoate + A + H2O. It carries out the reaction (5Z,8Z,11Z,14Z,17Z)-eicosapentaenoate + AH2 + O2 = (11R)-hydroxy-(5Z,8Z,12E,14Z,17Z)-eicosapentaenoate + A + H2O. The catalysed reaction is (5Z,8Z,11Z,14Z,17Z)-eicosapentaenoate + AH2 + O2 = (18S)-hydroxy-(5Z,8Z,11Z,14Z,16E)-eicosapentaenoate + A + H2O. It catalyses the reaction (5Z,8Z,11Z,14Z,17Z)-eicosapentaenoate + AH2 + O2 = (18R)-hydroxy-(5Z,8Z,11Z,14Z,16E)-eicosapentaenoate + A + H2O. The enzyme catalyses (5Z,8Z,11Z,14Z,17Z)-eicosapentaenoate + AH2 + O2 = (15R)-hydroxy-(5Z,8Z,11Z,13E,17Z)-eicosapentaenoate + A + H2O. It carries out the reaction (5Z,8Z,11Z,14Z,17Z)-eicosapentaenoate + AH2 + O2 = (15S)-hydroxy-(5Z,8Z,11Z,13E,17Z)-eicosapentaenoate + A + H2O. The catalysed reaction is (7Z,10Z,13Z,16Z,19Z)-docosapentaenoate + AH2 + O2 = 13R-hydroxy-(7Z,10Z,14E,16Z,19Z)-docosapentaenoate + A + H2O. It catalyses the reaction (4Z,7Z,10Z,13Z,16Z,19Z)-docosahexaenoate + AH2 + O2 = 13-hydroxy-(4Z,7Z,10Z,14E,16Z,19Z)-docosahexaenoate + A + H2O. The enzyme catalyses (5S)-hydroxy-(6E,8Z,11Z,14Z)-eicosatetraenoate + AH2 + O2 = (5S,15R)-dihydroxy-(6E,8Z,11Z,13E)-eicosatetraenoate + A + H2O. It carries out the reaction (4Z,7Z,10Z,13Z,16Z,19Z)-docosahexaenoate + AH2 + O2 = 17R-hydroxy-(4Z,7Z,10Z,13Z,15E,19Z)-docosahexaenoate + A + H2O. The catalysed reaction is (5S)-hydroxy-(6E,8Z,11Z,14Z)-eicosatetraenoate + AH2 + O2 = (5S,15S)-dihydroxy-(6E,8Z,11Z,13E)-eicosatetraenoate + A + H2O. It catalyses the reaction (5S)-hydroxy-(6E,8Z,11Z,14Z)-eicosatetraenoate + AH2 + O2 = (5S,11R)-dihydroxy-(6E,8Z,12E,14Z)-eicosatetraenoate + A + H2O. The enzyme catalyses 2-(5Z,8Z,11Z,14Z-eicosatetraenoyl)-glycerol + 2 O2 = 2-glyceryl-prostaglandin G2. It carries out the reaction 2-glyceryl-prostaglandin G2 + AH2 = 2-glyceryl-prostaglandin H2 + A + H2O. The catalysed reaction is (5Z,8Z,11Z,14Z)-eicosatetraenoate + O2 = (15R)-hydroperoxy-(5Z,8Z,11Z,13E)-eicosatetraenoate. It catalyses the reaction (5Z,8Z,11Z,14Z)-eicosatetraenoate + O2 = 11R-hydroperoxy-(5Z,8Z,12E,14Z)-eicosatetraenoate. The enzyme catalyses (9Z,12Z)-octadecadienoate + AH2 + O2 = (9R)-hydroxy-(10E,12Z)-octadecadienoate + A + H2O. It carries out the reaction (9Z,12Z)-octadecadienoate + AH2 + O2 = (9S)-hydroxy-(10E,12Z)-octadecadienoate + A + H2O. The catalysed reaction is (9Z,12Z)-octadecadienoate + AH2 + O2 = (13S)-hydroxy-(9Z,11E)-octadecadienoate + A + H2O. It catalyses the reaction (9Z,12Z)-octadecadienoate + AH2 + O2 = (13R)-hydroxy-(9Z,11E)-octadecadienoate + A + H2O. It participates in lipid metabolism; prostaglandin biosynthesis. Dual cyclooxygenase and peroxidase in the biosynthesis pathway of prostanoids, a class of C20 oxylipins mainly derived from arachidonate ((5Z,8Z,11Z,14Z)-eicosatetraenoate, AA, C20:4(n-6)), with a particular role in the inflammatory response. The cyclooxygenase activity oxygenates AA to the hydroperoxy endoperoxide prostaglandin G2 (PGG2), and the peroxidase activity reduces PGG2 to the hydroxy endoperoxide prostaglandin H2 (PGH2), the precursor of all 2-series prostaglandins and thromboxanes. This complex transformation is initiated by abstraction of hydrogen at carbon 13 (with S-stereochemistry), followed by insertion of molecular O2 to form the endoperoxide bridge between carbon 9 and 11 that defines prostaglandins. The insertion of a second molecule of O2 (bis-oxygenase activity) yields a hydroperoxy group in PGG2 that is then reduced to PGH2 by two electrons. Similarly catalyzes successive cyclooxygenation and peroxidation of dihomo-gamma-linoleate (DGLA, C20:3(n-6)) and eicosapentaenoate (EPA, C20:5(n-3)) to corresponding PGH1 and PGH3, the precursors of 1- and 3-series prostaglandins. In an alternative pathway of prostanoid biosynthesis, converts 2-arachidonoyl lysophopholipids to prostanoid lysophopholipids, which are then hydrolyzed by intracellular phospholipases to release free prostanoids. Metabolizes 2-arachidonoyl glycerol yielding the glyceryl ester of PGH2, a process that can contribute to pain response. Generates lipid mediators from n-3 and n-6 polyunsaturated fatty acids (PUFAs) via a lipoxygenase-type mechanism. Oxygenates PUFAs to hydroperoxy compounds and then reduces them to corresponding alcohols. Plays a role in the generation of resolution phase interaction products (resolvins) during both sterile and infectious inflammation. Metabolizes docosahexaenoate (DHA, C22:6(n-3)) to 17R-HDHA, a precursor of the D-series resolvins (RvDs). As a component of the biosynthetic pathway of E-series resolvins (RvEs), converts eicosapentaenoate (EPA, C20:5(n-3)) primarily to 18S-HEPE that is further metabolized by ALOX5 and LTA4H to generate 18S-RvE1 and 18S-RvE2. In vascular endothelial cells, converts docosapentaenoate (DPA, C22:5(n-3)) to 13R-HDPA, a precursor for 13-series resolvins (RvTs) shown to activate macrophage phagocytosis during bacterial infection. In activated leukocytes, contributes to oxygenation of hydroxyeicosatetraenoates (HETE) to diHETES (5,15-diHETE and 5,11-diHETE). Can also use linoleate (LA, (9Z,12Z)-octadecadienoate, C18:2(n-6)) as substrate and produce hydroxyoctadecadienoates (HODEs) in a regio- and stereospecific manner, being (9R)-HODE ((9R)-hydroxy-(10E,12Z)-octadecadienoate) and (13S)-HODE ((13S)-hydroxy-(9Z,11E)-octadecadienoate) its major products. During neuroinflammation, plays a role in neuronal secretion of specialized preresolving mediators (SPMs) 15R-lipoxin A4 that regulates phagocytic microglia. The chain is Prostaglandin G/H synthase 2 (PTGS2) from Cavia porcellus (Guinea pig).